The sequence spans 360 residues: Sphingolipid delta(4)-desaturase (360 aa).

3 consecutive transmembrane segments (helical) span residues 67–87 (AVVL…VLSF), 89–109 (FLAL…LCIH), and 125–145 (LFAI…FQPY). The Histidine box-1 signature appears at 109 to 113 (HELSH). Positions 146-150 (HQLHH) match the Histidine box-2 motif. Transmembrane regions (helical) follow at residues 170–190 (VLSS…FYAL), 202–222 (FIHL…IKFG), and 228–248 (WYLI…GHFI). Residues 288–292 (HNEHH) carry the Histidine box-3 motif.

The protein belongs to the fatty acid desaturase type 1 family. DEGS subfamily.

Its subcellular location is the membrane. The catalysed reaction is an N-acylsphinganine + 2 Fe(II)-[cytochrome b5] + O2 + 2 H(+) = an N-acylsphing-4-enine + 2 Fe(III)-[cytochrome b5] + 2 H2O. It functions in the pathway lipid metabolism; sphingolipid metabolism. Its function is as follows. Delta(4)-fatty-acid desaturase which introduces a double bond at the 4-position in the long-chain base (LCB) of ceramides. Required for the formation of the monounsaturated sphingoid base (E)-sphing-4-enine during glucosylceramide (GluCer) biosynthesis. The chain is Sphingolipid delta(4)-desaturase from Komagataella phaffii (strain GS115 / ATCC 20864) (Yeast).